The primary structure comprises 704 residues: MKSPCRAAAGWLVLLLSSCCLGYVIATEWAAAVTTDNGILFFDSNWRKISSAAHQYSRISAFAYDEVLGKLYFADLDHPEYRLFALDYDDTDELHKVTKLLPKSAQTAYISGMAFDHLERRLYWTEKGTRSVYYVAIDELLSSTRSAAAAANGTAAAAATAVEATTSAPPPSSSSPVQLVATVQPDHELAGLAIDECRRHLYWTNCYPKTSNIVRAAMNGTVLNVHEEQVYLPKGITVDHYRNRLYWVEKKYGRRYTIESADLEVNDQRTLQTGLDRLPADIAVKNDYIYWTDQENNEIYEMSKEPNAPSRTVYRGEHPSAVILRANLLLEHQRNNPDCRSVVDRILENMQNSKPASVLQQETQQQGQLTVCLNNGTVNHHTNTCLCQPAFGGKLCEIDLCNNYCAQGSCRIGRDNRPRCDCDRRYEGDRCDRNRCDGFCLNGGRCQFSNGTAGRTEEEMGDRTCLCESTGYSGARCENPICGTDYCYNGECYVEEGKRPKCRCKAGYRGERCEEYSCNNYCLNGGHCTLGNETTVPECECGEEFAGQRCEIAVRLCSTYNEDPQWQQYCLGISKTLPLMEPKVTYCKESFNRTVVYTSLCFTVSFALLLAVVLVVSRMMKPPRPRITKKMVVTPMTSRPPTTQCEITIENCCNMNVCETPCFDTKLLKKSKKEDKQFLLEDIEDVGGSYRKLPNCGDGTAERK.

A signal peptide spans 1–26 (MKSPCRAAAGWLVLLLSSCCLGYVIA). The Extracellular portion of the chain corresponds to 27–594 (TEWAAAVTTD…TYCKESFNRT (568 aa)). 4 LDL-receptor class B repeats span residues 69–119 (GKLY…DHLE), 120–166 (RRLY…EATT), 199–242 (RHLY…DHYR), and 243–288 (NRLY…KNDY). Asn-152 and Asn-219 each carry an N-linked (GlcNAc...) asparagine glycan. 3 consecutive EGF-like domains span residues 363-397 (TQQQ…KLCE), 432-478 (DRNR…ARCE), and 514-551 (EEYS…QRCE). Intrachain disulfides connect Cys-372–Cys-385, Cys-387–Cys-396, Cys-436–Cys-446, Cys-440–Cys-465, Cys-467–Cys-477, Cys-518–Cys-528, Cys-522–Cys-539, and Cys-541–Cys-550. Asn-375 carries N-linked (GlcNAc...) asparagine glycosylation. Asn-450 carries an N-linked (GlcNAc...) asparagine glycan. An N-linked (GlcNAc...) asparagine glycan is attached at Asn-532. Asn-592 is a glycosylation site (N-linked (GlcNAc...) asparagine). A helical transmembrane segment spans residues 595–615 (VVYTSLCFTVSFALLLAVVLV). Residues 616–704 (VSRMMKPPRP…NCGDGTAERK (89 aa)) lie on the Cytoplasmic side of the membrane.

Belongs to the cueball family.

It localises to the cell membrane. In terms of biological role, has a role in spermatogenesis and oogenesis. In Anopheles gambiae (African malaria mosquito), this protein is Protein cueball.